Consider the following 428-residue polypeptide: Histidinol dehydrogenase (428 aa).

Substrate is bound by residues serine 232, glutamine 254, and histidine 257. The Zn(2+) site is built by glutamine 254 and histidine 257. Catalysis depends on proton acceptor residues glutamate 324 and histidine 325. The substrate site is built by histidine 325, aspartate 358, glutamate 412, and histidine 417. Aspartate 358 provides a ligand contact to Zn(2+). A Zn(2+)-binding site is contributed by histidine 417.

The protein belongs to the histidinol dehydrogenase family. Zn(2+) is required as a cofactor.

It catalyses the reaction L-histidinol + 2 NAD(+) + H2O = L-histidine + 2 NADH + 3 H(+). The protein operates within amino-acid biosynthesis; L-histidine biosynthesis; L-histidine from 5-phospho-alpha-D-ribose 1-diphosphate: step 9/9. In terms of biological role, catalyzes the sequential NAD-dependent oxidations of L-histidinol to L-histidinaldehyde and then to L-histidine. The sequence is that of Histidinol dehydrogenase from Thermotoga maritima (strain ATCC 43589 / DSM 3109 / JCM 10099 / NBRC 100826 / MSB8).